Reading from the N-terminus, the 146-residue chain is UPF0178 protein Lin1493 (146 aa).

It belongs to the UPF0178 family.

The chain is UPF0178 protein Lin1493 from Listeria innocua serovar 6a (strain ATCC BAA-680 / CLIP 11262).